Consider the following 422-residue polypeptide: Phosphoribosylamine--glycine ligase (422 aa).

One can recognise an ATP-grasp domain in the interval 107–313 (KDLMKKYDIP…LVQVLLDLLD (207 aa)). 133–194 (VQEKGAPIVI…EEYLSGEEFS (62 aa)) contacts ATP. The Mg(2+) site is built by glutamate 283 and asparagine 285.

It belongs to the GARS family. Mg(2+) serves as cofactor. The cofactor is Mn(2+).

The enzyme catalyses 5-phospho-beta-D-ribosylamine + glycine + ATP = N(1)-(5-phospho-beta-D-ribosyl)glycinamide + ADP + phosphate + H(+). It participates in purine metabolism; IMP biosynthesis via de novo pathway; N(1)-(5-phospho-D-ribosyl)glycinamide from 5-phospho-alpha-D-ribose 1-diphosphate: step 2/2. This is Phosphoribosylamine--glycine ligase from Bacillus subtilis (strain 168).